A 419-amino-acid polypeptide reads, in one-letter code: UDP-N-acetylglucosamine 1-carboxyvinyltransferase (419 aa).

22–23 (KN) contacts phosphoenolpyruvate. A UDP-N-acetyl-alpha-D-glucosamine-binding site is contributed by Arg-93. Residue Cys-117 is the Proton donor of the active site. 2-(S-cysteinyl)pyruvic acid O-phosphothioketal is present on Cys-117. Residues Asp-307 and Ile-329 each coordinate UDP-N-acetyl-alpha-D-glucosamine.

This sequence belongs to the EPSP synthase family. MurA subfamily.

The protein resides in the cytoplasm. The catalysed reaction is phosphoenolpyruvate + UDP-N-acetyl-alpha-D-glucosamine = UDP-N-acetyl-3-O-(1-carboxyvinyl)-alpha-D-glucosamine + phosphate. It functions in the pathway cell wall biogenesis; peptidoglycan biosynthesis. Functionally, cell wall formation. Adds enolpyruvyl to UDP-N-acetylglucosamine. The polypeptide is UDP-N-acetylglucosamine 1-carboxyvinyltransferase (Shewanella frigidimarina (strain NCIMB 400)).